The sequence spans 279 residues: Thymidylate synthase (279 aa).

Residue 132–133 (RR) coordinates dUMP. Cys-153 (nucleophile) is an active-site residue. Residues 178–181 (RSND), Asn-189, and 219–221 (HIY) contribute to the dUMP site. Asp-181 lines the (6R)-5,10-methylene-5,6,7,8-tetrahydrofolate pocket. Ala-278 provides a ligand contact to (6R)-5,10-methylene-5,6,7,8-tetrahydrofolate.

The protein belongs to the thymidylate synthase family. Bacterial-type ThyA subfamily. In terms of assembly, homodimer.

The protein resides in the cytoplasm. It catalyses the reaction dUMP + (6R)-5,10-methylene-5,6,7,8-tetrahydrofolate = 7,8-dihydrofolate + dTMP. It participates in pyrimidine metabolism; dTTP biosynthesis. Functionally, catalyzes the reductive methylation of 2'-deoxyuridine-5'-monophosphate (dUMP) to 2'-deoxythymidine-5'-monophosphate (dTMP) while utilizing 5,10-methylenetetrahydrofolate (mTHF) as the methyl donor and reductant in the reaction, yielding dihydrofolate (DHF) as a by-product. This enzymatic reaction provides an intracellular de novo source of dTMP, an essential precursor for DNA biosynthesis. In Lactococcus lactis subsp. lactis (strain IL1403) (Streptococcus lactis), this protein is Thymidylate synthase.